Consider the following 594-residue polypeptide: ATP-dependent zinc metalloprotease FtsH 1 (594 aa).

Residues 1 to 2 lie on the Cytoplasmic side of the membrane; that stretch reads MR. Residues 3–23 traverse the membrane as a helical segment; the sequence is WWAGAALLLAALLFGRPAAAM. The Extracellular portion of the chain corresponds to 24–92; that stretch reads EAQPVAYSEF…RVEFVRPADP (69 aa). The helical transmembrane segment at 93-113 threads the bilayer; it reads IAFRTLLRFIPPLLILGAILW. Over 114–594 the chain is Cytoplasmic; it reads FTRRTAGGSG…ANSRGDEGNQ (481 aa). 186–193 is an ATP binding site; sequence GPPGTGKT. His408 contacts Zn(2+). Residue Glu409 is part of the active site. The Zn(2+) site is built by His412 and Asp485.

It in the central section; belongs to the AAA ATPase family. The protein in the C-terminal section; belongs to the peptidase M41 family. As to quaternary structure, homohexamer. Zn(2+) serves as cofactor.

The protein resides in the cell membrane. In terms of biological role, acts as a processive, ATP-dependent zinc metallopeptidase for both cytoplasmic and membrane proteins. Plays a role in the quality control of integral membrane proteins. The protein is ATP-dependent zinc metalloprotease FtsH 1 of Symbiobacterium thermophilum (strain DSM 24528 / JCM 14929 / IAM 14863 / T).